The chain runs to 338 residues: D-xylulose reductase (338 aa).

Residues C40, H65, and E151 each coordinate Zn(2+).

Belongs to the zinc-containing alcohol dehydrogenase family. As to quaternary structure, homotetramer. The cofactor is Zn(2+).

The catalysed reaction is xylitol + NAD(+) = D-xylulose + NADH + H(+). This Morganella morganii (Proteus morganii) protein is D-xylulose reductase.